Reading from the N-terminus, the 229-residue chain is Urease accessory protein UreG (229 aa).

24–31 (GPVGSGKT) lines the GTP pocket.

It belongs to the SIMIBI class G3E GTPase family. UreG subfamily. Homodimer. UreD, UreF and UreG form a complex that acts as a GTP-hydrolysis-dependent molecular chaperone, activating the urease apoprotein by helping to assemble the nickel containing metallocenter of UreC. The UreE protein probably delivers the nickel.

It is found in the cytoplasm. Its function is as follows. Facilitates the functional incorporation of the urease nickel metallocenter. This process requires GTP hydrolysis, probably effectuated by UreG. The chain is Urease accessory protein UreG from Albidiferax ferrireducens (strain ATCC BAA-621 / DSM 15236 / T118) (Rhodoferax ferrireducens).